The sequence spans 296 residues: LysM and putative peptidoglycan-binding domain-containing protein 4 (296 aa).

Residues 1 to 217 (MRHEELLTKT…PMDGADCGIQ (217 aa)) lie on the Extracellular side of the membrane. Residues 29-67 (KNGSGDSGDSSEEESHRVVLRPRGKERHKSGVHQPPQAG) are disordered. Asn-30 carries N-linked (GlcNAc...) asparagine glycosylation. The span at 46–59 (VVLRPRGKERHKSG) shows a compositional bias: basic residues. Residues 74-118 (LQRELAQEDSLNKLALQYGCKVADIKKVNNFIREQDLYALKSVKI) enclose the LysM domain. The helical transmembrane segment at 218-238 (WWNAVFIMLLIGIVLPVFYLV) threads the bilayer. The Cytoplasmic segment spans residues 239–296 (YFKIQASGETPNSLNTTVIPNGSMAMGTVPGQAPRLAVAVPAVTSADSQFSQTTQAGS).

The protein resides in the membrane. This is LysM and putative peptidoglycan-binding domain-containing protein 4 (LYSMD4) from Homo sapiens (Human).